A 1012-amino-acid chain; its full sequence is Formate dehydrogenase 2 subunit alpha (cytochrome c-553) (1012 aa).

The segment at residues 1–33 is a signal peptide (tat-type signal); it reads MKTTRRSFLKLVGVSVVGLSLGQLGFDLEDAQA. A 4Fe-4S Mo/W bis-MGD-type domain is found at 43–99; sequence AKEVGTVCPFCSVCCQVIAYVRNGKLVSTEGDPDFPVNEGALCAKGAALFSMYTNPH. Residues cysteine 50, cysteine 53, cysteine 57, and cysteine 85 each contribute to the [4Fe-4S] cluster site. Selenocysteine 189 serves as a coordination point for W-bis(molybdopterin guanine dinucleotide). Residue selenocysteine 189 is a non-standard amino acid, selenocysteine. Ca(2+)-binding residues include threonine 389, arginine 391, lysine 394, leucine 424, and asparagine 426.

This sequence belongs to the prokaryotic molybdopterin-containing oxidoreductase family. Heterotrimer of cytochrome c3 FDH2C and formate dehydrogenase FDH2 alpha and beta subunits that forms the FdhABC(3) complex. The cofactor is [4Fe-4S] cluster. Requires W-bis(molybdopterin guanine dinucleotide) as cofactor. In terms of processing, predicted to be exported by the Tat system. The position of the signal peptide cleavage has not been experimentally proven.

The protein localises to the periplasm. The enzyme catalyses 2 Fe(III)-[cytochrome c553] + formate = 2 Fe(II)-[cytochrome c553] + CO2 + H(+). Alpha chain of the formate dehydrogenase (FDH) that catalyzes the reversible two-electron oxidation of formate to carbon dioxide. The alpha subunit of formate dehydrogenase forms the active site. The protein is Formate dehydrogenase 2 subunit alpha (cytochrome c-553) of Nitratidesulfovibrio vulgaris (strain ATCC 29579 / DSM 644 / CCUG 34227 / NCIMB 8303 / VKM B-1760 / Hildenborough) (Desulfovibrio vulgaris).